The primary structure comprises 337 residues: Holliday junction branch migration complex subunit RuvB (337 aa).

Positions 1 to 179 are large ATPase domain (RuvB-L); it reads MTHQVSVLHQ…FSFTGRVAYY (179 aa). ATP contacts are provided by residues Leu-18, Arg-19, Gly-60, Lys-63, Thr-64, Ser-65, 126-128, Arg-169, Tyr-179, and Arg-216; that span reads EDY. Thr-64 lines the Mg(2+) pocket. The tract at residues 180–250 is small ATPAse domain (RuvB-S); it reads SDEDLATILR…VAEKALAMLL (71 aa). The interval 253-337 is head domain (RuvB-H); it reads EWGLNEIDIK…DNLQSLGEEK (85 aa). DNA-binding residues include Lys-308 and Arg-313.

It belongs to the RuvB family. Homohexamer. Forms an RuvA(8)-RuvB(12)-Holliday junction (HJ) complex. HJ DNA is sandwiched between 2 RuvA tetramers; dsDNA enters through RuvA and exits via RuvB. An RuvB hexamer assembles on each DNA strand where it exits the tetramer. Each RuvB hexamer is contacted by two RuvA subunits (via domain III) on 2 adjacent RuvB subunits; this complex drives branch migration. In the full resolvosome a probable DNA-RuvA(4)-RuvB(12)-RuvC(2) complex forms which resolves the HJ.

It localises to the cytoplasm. The catalysed reaction is ATP + H2O = ADP + phosphate + H(+). Functionally, the RuvA-RuvB-RuvC complex processes Holliday junction (HJ) DNA during genetic recombination and DNA repair, while the RuvA-RuvB complex plays an important role in the rescue of blocked DNA replication forks via replication fork reversal (RFR). RuvA specifically binds to HJ cruciform DNA, conferring on it an open structure. The RuvB hexamer acts as an ATP-dependent pump, pulling dsDNA into and through the RuvAB complex. RuvB forms 2 homohexamers on either side of HJ DNA bound by 1 or 2 RuvA tetramers; 4 subunits per hexamer contact DNA at a time. Coordinated motions by a converter formed by DNA-disengaged RuvB subunits stimulates ATP hydrolysis and nucleotide exchange. Immobilization of the converter enables RuvB to convert the ATP-contained energy into a lever motion, pulling 2 nucleotides of DNA out of the RuvA tetramer per ATP hydrolyzed, thus driving DNA branch migration. The RuvB motors rotate together with the DNA substrate, which together with the progressing nucleotide cycle form the mechanistic basis for DNA recombination by continuous HJ branch migration. Branch migration allows RuvC to scan DNA until it finds its consensus sequence, where it cleaves and resolves cruciform DNA. The sequence is that of Holliday junction branch migration complex subunit RuvB from Chlamydia abortus (strain DSM 27085 / S26/3) (Chlamydophila abortus).